Here is a 470-residue protein sequence, read N- to C-terminus: Chromosomal replication initiator protein DnaA (470 aa).

A domain I, interacts with DnaA modulators region spans residues 1-79; it reads MTDDTWGLLR…AVQRLAFKVA (79 aa). Residues 79–128 are domain II; it reads AANSPTRPVQPTMSEAIEEPAPLQTTVVDQLGNQEGNTSVKSPPEDLQAA. The segment at 129-350 is domain III, AAA+ region; sequence PLDPRFTFDS…GALTRLFAFA (222 aa). Residues G173, G175, K176, and T177 each contribute to the ATP site. Positions 351–470 are domain IV, binds dsDNA; sequence SLVGREIDMD…VEMLRRSLEA (120 aa).

Belongs to the DnaA family. As to quaternary structure, oligomerizes as a right-handed, spiral filament on DNA at oriC.

Its subcellular location is the cytoplasm. In terms of biological role, plays an essential role in the initiation and regulation of chromosomal replication. ATP-DnaA binds to the origin of replication (oriC) to initiate formation of the DNA replication initiation complex once per cell cycle. Binds the DnaA box (a 9 base pair repeat at the origin) and separates the double-stranded (ds)DNA. Forms a right-handed helical filament on oriC DNA; dsDNA binds to the exterior of the filament while single-stranded (ss)DNA is stabiized in the filament's interior. The ATP-DnaA-oriC complex binds and stabilizes one strand of the AT-rich DNA unwinding element (DUE), permitting loading of DNA polymerase. After initiation quickly degrades to an ADP-DnaA complex that is not apt for DNA replication. Binds acidic phospholipids. The chain is Chromosomal replication initiator protein DnaA from Ruegeria sp. (strain TM1040) (Silicibacter sp.).